Consider the following 157-residue polypeptide: 2-C-methyl-D-erythritol 2,4-cyclodiphosphate synthase (157 aa).

A divalent metal cation contacts are provided by D8 and H10. 4-CDP-2-C-methyl-D-erythritol 2-phosphate-binding positions include 8–10 (DVH) and 34–35 (HS). H42 provides a ligand contact to a divalent metal cation. Residues 56-58 (DIG), 132-135 (TTNE), and R142 each bind 4-CDP-2-C-methyl-D-erythritol 2-phosphate.

This sequence belongs to the IspF family. As to quaternary structure, homotrimer. A divalent metal cation is required as a cofactor.

The enzyme catalyses 4-CDP-2-C-methyl-D-erythritol 2-phosphate = 2-C-methyl-D-erythritol 2,4-cyclic diphosphate + CMP. The protein operates within isoprenoid biosynthesis; isopentenyl diphosphate biosynthesis via DXP pathway; isopentenyl diphosphate from 1-deoxy-D-xylulose 5-phosphate: step 4/6. Involved in the biosynthesis of isopentenyl diphosphate (IPP) and dimethylallyl diphosphate (DMAPP), two major building blocks of isoprenoid compounds. Catalyzes the conversion of 4-diphosphocytidyl-2-C-methyl-D-erythritol 2-phosphate (CDP-ME2P) to 2-C-methyl-D-erythritol 2,4-cyclodiphosphate (ME-CPP) with a corresponding release of cytidine 5-monophosphate (CMP). The protein is 2-C-methyl-D-erythritol 2,4-cyclodiphosphate synthase of Chlorobium luteolum (strain DSM 273 / BCRC 81028 / 2530) (Pelodictyon luteolum).